The primary structure comprises 415 residues: Thyroxine-binding globulin (415 aa).

A signal peptide spans 1-20 (MSPFLYLVLLVLGLHATIHC). An N-linked (GlcNAc...) (complex) asparagine glycan is attached at Asn36. N-linked (GlcNAc...) asparagine glycosylation is present at Asn99. Ile116 carries an N-linked (GlcNAc...) asparagine; in variant Gary glycan. Asn165 and Asn253 each carry an N-linked (GlcNAc...) asparagine glycan. Asn293 and Arg398 together coordinate thyroxine.

Belongs to the serpin family. In terms of tissue distribution, expressed by the liver and secreted in plasma.

The protein resides in the secreted. In terms of biological role, major thyroid hormone transport protein in serum. The sequence is that of Thyroxine-binding globulin (SERPINA7) from Homo sapiens (Human).